Consider the following 355-residue polypeptide: MKLTYILLIAVVGVAIEAKSVKKSKAHHKKKRHETLADNYKLNRIKDSDCKDVADDCKAFGKLEKDDENSCFNNPDKARNECPVSCKLCVSKRSKKQSDYMGGYDLQPQQCSQQSCYETPQWSVQNCAVTCQLCQPGVSSGPVDQDVRCPFWGQYGYCSQQQQQQQTDGYISNNCPFSCNTYGSAQPAQQPYPYPIEALSPYQPNAMPTPPQGVTPAPLPPYFQQQGYGYPQQPQPTQPVQPGQTQAPTAAQSTPAPVQTTPASGKTTTEAAEETTTEAAAEGAETTAAPAATQAPAAAGQEGQQPAAGGQEPQEAQEQEGQQPGTEPAQSDKSNKKKHKKDKAQKKSKSHKKQH.

An N-terminal signal peptide occupies residues 1–18 (MKLTYILLIAVVGVAIEA). 3 ShKT domains span residues 50 to 89 (CKDV…CKLC), 107 to 134 (QPQQ…CQLC), and 140 to 182 (SGPV…CNTY). Disulfide bonds link Cys-50/Cys-89, Cys-57/Cys-82, Cys-71/Cys-86, Cys-116/Cys-131, Cys-149/Cys-175, and Cys-158/Cys-179. A propeptide spanning residues 92–355 (KRSKKQSDYM…KKSKSHKKQH (264 aa)) is cleaved from the precursor. Residues 202–355 (YQPNAMPTPP…KKSKSHKKQH (154 aa)) form a disordered region. The span at 207 to 221 (MPTPPQGVTPAPLPP) shows a compositional bias: pro residues. Low complexity-rich tracts occupy residues 222–232 (YFQQQGYGYPQ), 240–270 (VQPG…TTTE), and 277–332 (TEAA…AQSD). Positions 335–355 (NKKKHKKDKAQKKSKSHKKQH) are enriched in basic residues.

The protein belongs to the NEP3 family. Nematocytes. In late planulae, transcripts are found throughout the ectoderm in nematocytes, with high concentration of expressing cells in the oral pole. In primary polyps, is expressed in nematocytes in the body wall and physa ectoderm and in the upper and lower pharynx.

It is found in the nematocyst. It localises to the secreted. In terms of biological role, neurotoxin. In vivo, induces pronounced contraction and tail twitching on zebrafish larvae, as well as death 5 hours later. The sequence is that of Nematocyst expressed protein 3 from Nematostella vectensis (Starlet sea anemone).